The following is a 393-amino-acid chain: Na(+)/H(+) antiporter NhaA (393 aa).

Helical transmembrane passes span A14–V34, L60–V80, M96–F116, A125–L145, V155–F175, Q179–N199, V218–I238, F263–L283, L292–L312, I330–L350, and Y362–L382.

The protein belongs to the NhaA Na(+)/H(+) (TC 2.A.33) antiporter family.

Its subcellular location is the cell inner membrane. It catalyses the reaction Na(+)(in) + 2 H(+)(out) = Na(+)(out) + 2 H(+)(in). In terms of biological role, na(+)/H(+) antiporter that extrudes sodium in exchange for external protons. In Pectobacterium atrosepticum (strain SCRI 1043 / ATCC BAA-672) (Erwinia carotovora subsp. atroseptica), this protein is Na(+)/H(+) antiporter NhaA.